Here is a 319-residue protein sequence, read N- to C-terminus: MamJ paralog LimJ (319 aa).

Disordered stretches follow at residues 1 to 59 and 145 to 176; these read MMME…PAPV and AAAP…TETE. Over residues 30–52 the composition is skewed to low complexity; sequence AALAPAADAEIPASSAPEPAAPI. Over residues 150–164 the composition is skewed to acidic residues; the sequence is PEPEPVPEPEPEPEP.

Belongs to the magnetosome MamJ protein family.

It is found in the magnetosome. Functionally, regulates the dynamic behavior of MamK filaments; paralog MamJ also promotes MamK turnover. At least one other protein besides MamJ and LimJ is required for MamK turnover. Might connect magnetosomes to MamK filaments. This is MamJ paralog LimJ from Paramagnetospirillum magneticum (strain ATCC 700264 / AMB-1) (Magnetospirillum magneticum).